A 440-amino-acid chain; its full sequence is Ribosomal protein uS12 methylthiotransferase RimO (440 aa).

Residues Pro-6 to Pro-116 form the MTTase N-terminal domain. Residues Cys-15, Cys-51, Cys-80, Cys-149, Cys-153, and Cys-156 each contribute to the [4Fe-4S] cluster site. Residues Leu-135–Arg-374 enclose the Radical SAM core domain. The 65-residue stretch at Gln-376 to Val-440 folds into the TRAM domain.

Belongs to the methylthiotransferase family. RimO subfamily. Requires [4Fe-4S] cluster as cofactor.

The protein localises to the cytoplasm. It catalyses the reaction L-aspartate(89)-[ribosomal protein uS12]-hydrogen + (sulfur carrier)-SH + AH2 + 2 S-adenosyl-L-methionine = 3-methylsulfanyl-L-aspartate(89)-[ribosomal protein uS12]-hydrogen + (sulfur carrier)-H + 5'-deoxyadenosine + L-methionine + A + S-adenosyl-L-homocysteine + 2 H(+). Catalyzes the methylthiolation of an aspartic acid residue of ribosomal protein uS12. The polypeptide is Ribosomal protein uS12 methylthiotransferase RimO (Ectopseudomonas mendocina (strain ymp) (Pseudomonas mendocina)).